The primary structure comprises 139 residues: Tetra-peptide repeat homeobox-like protein (139 aa).

Disordered regions lie at residues 1-22 and 78-139; these read MQDP…RQRQ and ERWF…QQPQ. The homeobox DNA-binding region spans 20-79; the sequence is QRQDRTIYNWKQQEVLENHFKEEQYPDYDTRQELAEMLNLREYQVQVWFKNRRAKRSRER. Residues 82 to 139 show a composition bias toward low complexity; the sequence is QKQLQQLQKHPQQQHPQQQHPQQQLQQQQPQQQPQQQQPQQQPQQQQPQQQQLHQQPQ.

This sequence belongs to the paired homeobox family.

Its subcellular location is the nucleus. Its function is as follows. Transcription factor required for zygotic genome activation (ZGA), a critical event in early embryonic development during which the developmental control passes from maternally provided mRNAs to the expression of the zygotic genome after fertilization. Protein produced from maternal transcripts that binds and activates expression of key ZGA marker genes, such as NANOGNB, ZSCAN4, DUXB, KLF5 and DPPA3. Binds to regulatory DNA sequences containing a 5'-TAATCC-3' sequence motif. The chain is Tetra-peptide repeat homeobox-like protein from Homo sapiens (Human).